A 421-amino-acid chain; its full sequence is Histidine--tRNA ligase (421 aa).

This sequence belongs to the class-II aminoacyl-tRNA synthetase family. As to quaternary structure, homodimer.

The protein localises to the cytoplasm. It catalyses the reaction tRNA(His) + L-histidine + ATP = L-histidyl-tRNA(His) + AMP + diphosphate + H(+). The polypeptide is Histidine--tRNA ligase (Nitrosomonas eutropha (strain DSM 101675 / C91 / Nm57)).